The primary structure comprises 157 residues: 2-C-methyl-D-erythritol 2,4-cyclodiphosphate synthase (157 aa).

Residues D8 and H10 each coordinate a divalent metal cation. Residues 8-10 and 34-35 each bind 4-CDP-2-C-methyl-D-erythritol 2-phosphate; these read DVH and HS. Residue H42 coordinates a divalent metal cation. Residues 56-58, 61-65, 100-106, 132-135, F139, and R142 contribute to the 4-CDP-2-C-methyl-D-erythritol 2-phosphate site; these read DIG, FPDTD, AQAPKMA, and TTTE.

This sequence belongs to the IspF family. Homotrimer. Requires a divalent metal cation as cofactor.

It catalyses the reaction 4-CDP-2-C-methyl-D-erythritol 2-phosphate = 2-C-methyl-D-erythritol 2,4-cyclic diphosphate + CMP. It functions in the pathway isoprenoid biosynthesis; isopentenyl diphosphate biosynthesis via DXP pathway; isopentenyl diphosphate from 1-deoxy-D-xylulose 5-phosphate: step 4/6. In terms of biological role, involved in the biosynthesis of isopentenyl diphosphate (IPP) and dimethylallyl diphosphate (DMAPP), two major building blocks of isoprenoid compounds. Catalyzes the conversion of 4-diphosphocytidyl-2-C-methyl-D-erythritol 2-phosphate (CDP-ME2P) to 2-C-methyl-D-erythritol 2,4-cyclodiphosphate (ME-CPP) with a corresponding release of cytidine 5-monophosphate (CMP). This chain is 2-C-methyl-D-erythritol 2,4-cyclodiphosphate synthase, found in Pseudomonas fluorescens (strain Pf0-1).